A 360-amino-acid polypeptide reads, in one-letter code: MLYWLVDFASSVPALNVFRYITFRTGGAMVTGALFVFMFGPWIIDNLRLRQGKGQPIRSDGPQSHLSKKGTPTMGGLMILSGLVVGTVLWANPLNPYVWIVLAVTLGFGFVGFYDDYLKVTKQSDKGFSGRTRLAIETIIAAAACYALMRLGRDPLSSSLAVPFLKDTAIYLGWFFVIFGGFIVVGAGNAVNLTDGLDGLAIVPVMIAAASFGLVSYLAGNAVFADYLQINYVAGTGELAVLCGALLGAGLGFLWFNAPPASIFMGDTGSLALGGMLGTIAVAVKHEFVLAVIGGLFVLEAVSVIVQVASFKLTGKRVFRMAPIHHHFEQKGWTEPQIVIRFWIISVMLALAGLSTLKLR.

10 helical membrane-spanning segments follow: residues 25–45 (TGGA…WIID), 71–91 (TPTM…VLWA), 94–114 (LNPY…VGFY), 129–148 (SGRT…CYAL), 168–188 (TAIY…VGAG), 199–219 (GLAI…SYLA), 239–259 (LAVL…FNAP), 263–283 (IFMG…IAVA), 288–308 (FVLA…IVQV), and 337–357 (QIVI…LSTL).

The protein belongs to the glycosyltransferase 4 family. MraY subfamily. Mg(2+) serves as cofactor.

The protein resides in the cell inner membrane. The catalysed reaction is UDP-N-acetyl-alpha-D-muramoyl-L-alanyl-gamma-D-glutamyl-meso-2,6-diaminopimeloyl-D-alanyl-D-alanine + di-trans,octa-cis-undecaprenyl phosphate = di-trans,octa-cis-undecaprenyl diphospho-N-acetyl-alpha-D-muramoyl-L-alanyl-D-glutamyl-meso-2,6-diaminopimeloyl-D-alanyl-D-alanine + UMP. The protein operates within cell wall biogenesis; peptidoglycan biosynthesis. Functionally, catalyzes the initial step of the lipid cycle reactions in the biosynthesis of the cell wall peptidoglycan: transfers peptidoglycan precursor phospho-MurNAc-pentapeptide from UDP-MurNAc-pentapeptide onto the lipid carrier undecaprenyl phosphate, yielding undecaprenyl-pyrophosphoryl-MurNAc-pentapeptide, known as lipid I. This is Phospho-N-acetylmuramoyl-pentapeptide-transferase from Rhodopseudomonas palustris (strain BisA53).